A 116-amino-acid polypeptide reads, in one-letter code: MATVPALNAYRHLMRAARIAFQGDTQILSAAQVQIRNEFRQKASIDSTGASAAIQHAEEVAKVLRENVVQGKKTEEGKDTYKLRIHEHTERGDNESILTAGSGNTTGGGCCGGGGR.

The interval 89-116 (TERGDNESILTAGSGNTTGGGCCGGGGR) is disordered. The segment covering 104–116 (NTTGGGCCGGGGR) has biased composition (gly residues).

This sequence belongs to the complex I LYR family. MZM1 subfamily. As to quaternary structure, interacts with RIP1.

It localises to the mitochondrion matrix. Its function is as follows. Assembly factor required for Rieske Fe-S protein RIP1 incorporation into the cytochrome b-c1 (CIII) complex. Functions as a chaperone, binding to this subunit within the mitochondrial matrix and stabilizing it prior to its translocation and insertion into the late CIII dimeric intermediate within the mitochondrial inner membrane. Modulates the mitochondrial matrix zinc pool. This chain is Mitochondrial zinc maintenance protein 1, mitochondrial (MZM1), found in Fusarium vanettenii (strain ATCC MYA-4622 / CBS 123669 / FGSC 9596 / NRRL 45880 / 77-13-4) (Fusarium solani subsp. pisi).